A 318-amino-acid chain; its full sequence is NADH-ubiquinone oxidoreductase chain 1 (318 aa).

8 consecutive transmembrane segments (helical) span residues 2-22, 68-88, 100-120, 146-166, 171-191, 231-251, 253-273, and 294-314; these read PMAN…FLML, ITLY…LWTP, LGLL…LWSG, LAII…STLI, HLWL…STLA, IIMM…DALS, ELYT…FLWI, and LPLT…ISSI.

This sequence belongs to the complex I subunit 1 family. As to quaternary structure, core subunit of respiratory chain NADH dehydrogenase (Complex I) which is composed of 45 different subunits.

It is found in the mitochondrion inner membrane. The catalysed reaction is a ubiquinone + NADH + 5 H(+)(in) = a ubiquinol + NAD(+) + 4 H(+)(out). In terms of biological role, core subunit of the mitochondrial membrane respiratory chain NADH dehydrogenase (Complex I) which catalyzes electron transfer from NADH through the respiratory chain, using ubiquinone as an electron acceptor. Essential for the catalytic activity and assembly of complex I. The sequence is that of NADH-ubiquinone oxidoreductase chain 1 (MT-ND1) from Homo sapiens (Human).